Here is a 1382-residue protein sequence, read N- to C-terminus: Hepatocyte growth factor receptor (1382 aa).

The N-terminal stretch at 1–24 is a signal peptide; sequence MKAPTALAPGILLLLLTLAQRSHG. The Extracellular segment spans residues 25-935; sequence ECKEALVKSE…IVQPDQNFAG (911 aa). The Sema domain occupies 27-516; that stretch reads KEALVKSEMN…TGKKITKIPL (490 aa). N-linked (GlcNAc...) asparagine glycosylation is present at Asn45. Cystine bridges form between Cys95/Cys101, Cys98/Cys160, Cys133/Cys141, and Cys173/Cys176. The N-linked (GlcNAc...) asparagine glycan is linked to Asn106. N-linked (GlcNAc...) asparagine glycans are attached at residues Asn203 and Asn359. 2 disulfide bridges follow: Cys299–Cys364 and Cys386–Cys398. N-linked (GlcNAc...) asparagine glycans are attached at residues Asn400 and Asn406. Disulfide bonds link Cys521/Cys539, Cys527/Cys562, Cys530/Cys546, and Cys542/Cys552. IPT/TIG domains lie at 564–656, 658–740, and 743–837; these read PAVY…FSYV, PVIT…FSYR, and PVVS…LTYV. Thr583 carries O-linked (Man) threonine glycosylation. N-linked (GlcNAc...) asparagine glycosylation is found at Asn608 and Asn636. O-linked (Man) threonine glycosylation is found at Thr677 and Thr762. Asn786 and Asn880 each carry an N-linked (GlcNAc...) asparagine glycan. A helical membrane pass occupies residues 936 to 956; sequence LIIGAVSISVVVLLVSGLFLW. Topologically, residues 957-1379 are cytoplasmic; sequence LRKRKHKDLG…LPSQDNIDGE (423 aa). Position 967 is a phosphoserine (Ser967). A Phosphothreonine modification is found at Thr978. Ser991, Ser998, and Ser1001 each carry phosphoserine. Tyr1004 carries the phosphotyrosine modification. The 268-residue stretch at 1079–1346 folds into the Protein kinase domain; that stretch reads VHFNEVIGRG…RISSIFSTFI (268 aa). ATP is bound by residues 1085-1093 and Lys1111; that span reads IGRGHFGCV. Asp1205 acts as the Proton acceptor in catalysis. Residues 1213-1382 form an interaction with RANBP9 region; that stretch reads LDEKFTVKVA…QDNIDGEANT (170 aa). Tyr1231 is subject to Phosphotyrosine. Phosphotyrosine; by autocatalysis occurs at positions 1235 and 1236. At Thr1290 the chain carries Phosphothreonine. The interaction with MUC20 stretch occupies residues 1321-1360; it reads WHPKAEMRPSVSELVSRISSIFSTFIGEHYVHVNATYVNV. Residues Tyr1350 and Tyr1357 each carry the phosphotyrosine; by autocatalysis modification. At Tyr1366 the chain carries Phosphotyrosine.

It belongs to the protein kinase superfamily. Tyr protein kinase family. Heterodimer made of an alpha chain (50 kDa) and a beta chain (145 kDa) which are disulfide linked. Binds PLXNB1. Interacts when phosphorylated with downstream effectors including STAT3, PIK3R1, SRC, PCLG1, GRB2 and GAB1. Interacts with SPSB1, SPSB2 and SPSB4. Interacts with INPP5D/SHIP1. When phosphorylated at Tyr-1357, interacts with INPPL1/SHIP2. Interacts with RANBP9 and RANBP10, as well as SPSB1, SPSB2, SPSB3 and SPSB4. SPSB1 binding occurs in the presence and in the absence of HGF, however HGF treatment has a positive effect on this interaction. Interacts with MUC20; prevents interaction with GRB2 and suppresses hepatocyte growth factor-induced cell proliferation. Interacts with GRB10. Interacts with PTPN1 and PTPN2. Interacts with HSP90AA1 and HSP90AB1; the interaction suppresses MET kinase activity. Interacts with tensin TNS3. Interacts (when phosphorylated) with tensin TNS4 (via SH2 domain); the interaction increases MET protein stability by inhibiting MET endocytosis and subsequent lysosomal degradation. In terms of processing, autophosphorylated in response to ligand binding on Tyr-1235 and Tyr-1236 in the kinase domain leading to further phosphorylation of Tyr-1350 and Tyr-1357 in the C-terminal multifunctional docking site. Dephosphorylated by PTPRJ at Tyr-1350 and Tyr-1366. Dephosphorylated by PTPN1 and PTPN2. Ubiquitinated. Ubiquitination by CBL regulates the receptor stability and activity through proteasomal degradation. Post-translationally, O-mannosylation of IPT/TIG domains by TMEM260 is required for protein maturation. O-mannosylated residues are composed of single mannose glycans that are not elongated or modified. In terms of tissue distribution, expressed at highest levels in lung, liver and kidney, also expressed in stomach, intestine, spleen, testis and brain. Not expressed in heart or muscle.

It localises to the membrane. The enzyme catalyses L-tyrosyl-[protein] + ATP = O-phospho-L-tyrosyl-[protein] + ADP + H(+). With respect to regulation, in its inactive state, the C-terminal tail interacts with the catalytic domain and inhibits the kinase activity. Upon ligand binding, the C-terminal tail is displaced and becomes phosphorylated, thus increasing the kinase activity. In terms of biological role, receptor tyrosine kinase that transduces signals from the extracellular matrix into the cytoplasm by binding to hepatocyte growth factor/HGF ligand. Regulates many physiological processes including proliferation, scattering, morphogenesis and survival. Ligand binding at the cell surface induces autophosphorylation of MET on its intracellular domain that provides docking sites for downstream signaling molecules. Following activation by ligand, interacts with the PI3-kinase subunit PIK3R1, PLCG1, SRC, GRB2, STAT3 or the adapter GAB1. Recruitment of these downstream effectors by MET leads to the activation of several signaling cascades including the RAS-ERK, PI3 kinase-AKT, or PLCgamma-PKC. The RAS-ERK activation is associated with the morphogenetic effects while PI3K/AKT coordinates prosurvival effects. During embryonic development, MET signaling plays a role in gastrulation, development and migration of muscles and neuronal precursors, angiogenesis and kidney formation. In adults, participates in wound healing as well as organ regeneration and tissue remodeling. Also promotes differentiation and proliferation of hematopoietic cells. This Rattus norvegicus (Rat) protein is Hepatocyte growth factor receptor (Met).